A 231-amino-acid chain; its full sequence is Nucleoside diphosphate kinase II, chloroplastic (231 aa).

A chloroplast-targeting transit peptide spans 1 to 62; sequence MVGATVVSKW…RNSASRRRLR (62 aa). 6 residues coordinate ATP: Lys-91, Phe-139, Arg-167, Thr-173, Arg-184, and Asn-194. Residue His-197 is the Pros-phosphohistidine intermediate of the active site.

This sequence belongs to the NDK family. In terms of assembly, interacts with PHYA, MPK3 and MPK6. Mg(2+) serves as cofactor. Autophosphorylated.

Its subcellular location is the plastid. It localises to the chloroplast. It carries out the reaction a 2'-deoxyribonucleoside 5'-diphosphate + ATP = a 2'-deoxyribonucleoside 5'-triphosphate + ADP. The catalysed reaction is a ribonucleoside 5'-diphosphate + ATP = a ribonucleoside 5'-triphosphate + ADP. Its function is as follows. Major role in the synthesis of nucleoside triphosphates other than ATP. The ATP gamma phosphate is transferred to the NDP beta phosphate via a ping-pong mechanism, using a phosphorylated active-site intermediate. May activate MPK3 and MPK6. May be involved in the regulation of cellular redox state and hydrogen peroxide-mediated MAP kinase signaling. The chain is Nucleoside diphosphate kinase II, chloroplastic (NDPK2) from Arabidopsis thaliana (Mouse-ear cress).